Here is an 82-residue protein sequence, read N- to C-terminus: Sec-independent protein translocase protein TatA (82 aa).

A helical transmembrane segment spans residues 1 to 21 (MGGISVWQLLIIAVIVVLLFG). The segment at 41–82 (KAMSEDEPAKKDDKDADFEPKSLEEQQKKEAAPESKKDKEQA) is disordered. Positions 42 to 82 (AMSEDEPAKKDDKDADFEPKSLEEQQKKEAAPESKKDKEQA) are enriched in basic and acidic residues.

The protein belongs to the TatA/E family. As to quaternary structure, the Tat system comprises two distinct complexes: a TatABC complex, containing multiple copies of TatA, TatB and TatC subunits, and a separate TatA complex, containing only TatA subunits. Substrates initially bind to the TatABC complex, which probably triggers association of the separate TatA complex to form the active translocon.

The protein resides in the cell inner membrane. Its function is as follows. Part of the twin-arginine translocation (Tat) system that transports large folded proteins containing a characteristic twin-arginine motif in their signal peptide across membranes. TatA could form the protein-conducting channel of the Tat system. The polypeptide is Sec-independent protein translocase protein TatA (Vibrio campbellii (strain ATCC BAA-1116)).